The primary structure comprises 1431 residues: DNA-directed RNA polymerase subunit beta' (1431 aa).

Zn(2+) is bound by residues Cys66, Cys68, Cys81, and Cys84. Mg(2+) contacts are provided by Asp470, Asp472, and Asp474. Cys813, Cys887, Cys894, and Cys897 together coordinate Zn(2+).

The protein belongs to the RNA polymerase beta' chain family. In terms of assembly, the RNAP catalytic core consists of 2 alpha, 1 beta, 1 beta' and 1 omega subunit. When a sigma factor is associated with the core the holoenzyme is formed, which can initiate transcription. Mg(2+) is required as a cofactor. The cofactor is Zn(2+).

It catalyses the reaction RNA(n) + a ribonucleoside 5'-triphosphate = RNA(n+1) + diphosphate. Functionally, DNA-dependent RNA polymerase catalyzes the transcription of DNA into RNA using the four ribonucleoside triphosphates as substrates. This Parabacteroides distasonis (strain ATCC 8503 / DSM 20701 / CIP 104284 / JCM 5825 / NCTC 11152) protein is DNA-directed RNA polymerase subunit beta'.